A 506-amino-acid chain; its full sequence is 2-isopropylmalate synthase (506 aa).

The region spanning 4–266 (ILFMDTTLRD…EPSMTLKEIK (263 aa)) is the Pyruvate carboxyltransferase domain. 4 residues coordinate Mn(2+): Asp-13, His-201, His-203, and Asn-237. Residues 390 to 506 (NITQLQVHFV…KLKSFIQLVK (117 aa)) are regulatory domain.

The protein belongs to the alpha-IPM synthase/homocitrate synthase family. LeuA type 1 subfamily. As to quaternary structure, homodimer. Mn(2+) serves as cofactor.

The protein localises to the cytoplasm. The enzyme catalyses 3-methyl-2-oxobutanoate + acetyl-CoA + H2O = (2S)-2-isopropylmalate + CoA + H(+). The protein operates within amino-acid biosynthesis; L-leucine biosynthesis; L-leucine from 3-methyl-2-oxobutanoate: step 1/4. In terms of biological role, catalyzes the condensation of the acetyl group of acetyl-CoA with 3-methyl-2-oxobutanoate (2-ketoisovalerate) to form 3-carboxy-3-hydroxy-4-methylpentanoate (2-isopropylmalate). This is 2-isopropylmalate synthase from Bacillus cereus (strain ATCC 10987 / NRS 248).